The chain runs to 277 residues: Probable ketoamine kinase HMPREF0351_12196 (277 aa).

84–86 is an ATP binding site; the sequence is EWI. Asp186 serves as the catalytic Proton acceptor.

This sequence belongs to the fructosamine kinase family.

It carries out the reaction N(6)-(D-ribulosyl)-L-lysine + ATP = N(6)-(3-O-phospho-D-ribulosyl)-L-lysine + ADP + H(+). It catalyses the reaction N-(D-ribulosyl)-cadaverine + ATP = N-(3-O-phospho-D-ribulosyl)-cadaverine + ADP + H(+). The catalysed reaction is N(6)-(D-erythrulosyl)-L-lysine + ATP = N(6)-(3-O-phospho-D-erythrulosyl)-L-lysine + ADP + H(+). The enzyme catalyses N-(D-erythrulosyl)-cadaverine + ATP = N-(3-O-phospho-D-erythrulosyl)-cadaverine + ADP + H(+). It carries out the reaction N(6)-D-ribulosyl-L-lysyl-[protein] + ATP = N(6)-(3-O-phospho-D-ribulosyl)-L-lysyl-[protein] + ADP + H(+). It catalyses the reaction N(6)-(D-erythrulosyl)-L-lysyl-[protein] + ATP = N(6)-(3-O-phospho-D-erythrulosyl)-L-lysyl-[protein] + ADP + H(+). Ketoamine kinase that phosphorylates ketoamines, such as erythruloselysine, erythrulosecadaverine, ribuloselysine and ribulosecadaverine, on the third carbon of the sugar moiety to generate ketoamine 3-phosphate. Has higher activity on free lysine (erythruloselysine and ribuloselysine), than on ribuloselysine and erythruloselysine residues on glycated proteins. The sequence is that of Probable ketoamine kinase HMPREF0351_12196 from Enterococcus faecium (strain ATCC BAA-472 / TX0016 / DO).